Reading from the N-terminus, the 270-residue chain is Ribosomal RNA small subunit methyltransferase A (270 aa).

Residues N18, L20, G45, E66, D91, and N112 each coordinate S-adenosyl-L-methionine.

Belongs to the class I-like SAM-binding methyltransferase superfamily. rRNA adenine N(6)-methyltransferase family. RsmA subfamily.

Its subcellular location is the cytoplasm. The enzyme catalyses adenosine(1518)/adenosine(1519) in 16S rRNA + 4 S-adenosyl-L-methionine = N(6)-dimethyladenosine(1518)/N(6)-dimethyladenosine(1519) in 16S rRNA + 4 S-adenosyl-L-homocysteine + 4 H(+). Functionally, specifically dimethylates two adjacent adenosines (A1518 and A1519) in the loop of a conserved hairpin near the 3'-end of 16S rRNA in the 30S particle. May play a critical role in biogenesis of 30S subunits. This is Ribosomal RNA small subunit methyltransferase A from Psychromonas ingrahamii (strain DSM 17664 / CCUG 51855 / 37).